The chain runs to 458 residues: UDP-N-acetylmuramate--L-alanine ligase (458 aa).

118–124 (GTHGKTT) lines the ATP pocket.

It belongs to the MurCDEF family.

Its subcellular location is the cytoplasm. The enzyme catalyses UDP-N-acetyl-alpha-D-muramate + L-alanine + ATP = UDP-N-acetyl-alpha-D-muramoyl-L-alanine + ADP + phosphate + H(+). It functions in the pathway cell wall biogenesis; peptidoglycan biosynthesis. In terms of biological role, cell wall formation. The chain is UDP-N-acetylmuramate--L-alanine ligase from Clostridium botulinum (strain Kyoto / Type A2).